The chain runs to 435 residues: Probable xyloglucan galactosyltransferase GT19 (435 aa).

Residues 1-6 (MASKST) are Cytoplasmic-facing. The helical; Signal-anchor for type II membrane protein transmembrane segment at 7-23 (VTTLTIFFFFFFFFIEP) threads the bilayer. Topologically, residues 24 to 435 (KVQSQQISAV…GVLDRIISRV (412 aa)) are lumenal. N-linked (GlcNAc...) asparagine glycans are attached at residues asparagine 140, asparagine 203, and asparagine 277.

This sequence belongs to the glycosyltransferase 47 family. In terms of tissue distribution, expressed in roots, hypocotyls, cotyledons, leaves, stems, stamens and pollen grains.

It is found in the golgi apparatus membrane. Functionally, functions in xyloglucan synthesis by adding side chains to the xylosylated glucan backbone. Involved in the galactosylation of hemicellulose xyloglucan. The polypeptide is Probable xyloglucan galactosyltransferase GT19 (Arabidopsis thaliana (Mouse-ear cress)).